Here is a 261-residue protein sequence, read N- to C-terminus: Protein LIKE COV 2 (261 aa).

Residues 1-38 are disordered; it reads MAEGKEATTSSLSQGLTPHQDPDDAPKSPPNSPNSSTR. The Cytoplasmic segment spans residues 1 to 56; that stretch reads MAEGKEATTSSLSQGLTPHQDPDDAPKSPPNSPNSSTRKACYGVLQSWVSKKFMTG. The segment covering 7-17 has biased composition (polar residues); that stretch reads ATTSSLSQGLT. A helical membrane pass occupies residues 57 to 77; the sequence is FVVLFPVAVTFLITWWFIQFV. The Extracellular portion of the chain corresponds to 78–91; that stretch reads DGFFSPIYENLGVD. The chain crosses the membrane as a helical span at residues 92-112; that stretch reads IFGLGFITSVLFTFFVGIFAS. Residues 113-261 are Cytoplasmic-facing; sequence SWLGSTVFWL…HSLRVPLNRL (149 aa).

This sequence belongs to the plant COV1 protein family.

The protein resides in the membrane. The polypeptide is Protein LIKE COV 2 (Arabidopsis thaliana (Mouse-ear cress)).